The sequence spans 201 residues: Imidazoleglycerol-phosphate dehydratase (201 aa).

Belongs to the imidazoleglycerol-phosphate dehydratase family.

Its subcellular location is the cytoplasm. The catalysed reaction is D-erythro-1-(imidazol-4-yl)glycerol 3-phosphate = 3-(imidazol-4-yl)-2-oxopropyl phosphate + H2O. Its pathway is amino-acid biosynthesis; L-histidine biosynthesis; L-histidine from 5-phospho-alpha-D-ribose 1-diphosphate: step 6/9. In Prochlorococcus marinus (strain MIT 9301), this protein is Imidazoleglycerol-phosphate dehydratase.